The primary structure comprises 601 residues: RNA-binding protein MEX3B (601 aa).

2 disordered regions span residues 1 to 39 (MPSSLFADLERNGSGGGGGGGGGGGGGGSGGGETLDDQR) and 90 to 109 (GRQGGSGRDGDRRGFSISPT). Ser-4 is modified (phosphoserine). Gly residues predominate over residues 13-33 (GSGGGGGGGGGGGGGGSGGGE). KH domains follow at residues 98-159 (DGDR…RREI) and 192-253 (QTTI…REEI). Disordered stretches follow at residues 284 to 332 (LHHG…TDSY) and 344 to 448 (TSRL…GGAS). Ser-320 carries the phosphoserine modification. 2 stretches are compositionally biased toward low complexity: residues 320 to 331 (SSSSLGSASTDS) and 362 to 371 (NGNNNNNGNG). Pro residues predominate over residues 395–404 (DPAPAPPPGT). Residues 420–442 (AAPVSSSCSSSASSSASSSSVVF) show a composition bias toward low complexity. Phosphoserine is present on Ser-494. The interval 514–546 (LPGLPSSDTSGSSSSSSSSSSSSSSSSGLRRKG) is disordered. Residues 519-540 (SSDTSGSSSSSSSSSSSSSSSS) are compositionally biased toward low complexity. Residues 550–590 (CSVCFESEVIAALVPCGHNLFCMECANRICEKSEPECPVCH) form an RING-type zinc finger.

Phosphorylation at Ser-494 creates a docking site for 14-3-3, which stabilizes the protein and modulates its ability to bind RNA.

The protein localises to the cytoplasm. The protein resides in the nucleus. Its subcellular location is the P-body. It localises to the cytoplasmic granule. Functionally, RNA-binding protein. May be involved in post-transcriptional regulatory mechanisms. The protein is RNA-binding protein MEX3B (Mex3b) of Mus musculus (Mouse).